The chain runs to 498 residues: MAKYVAAVDQGTTSTRCMIFDHAGRVVAVDQKEHTQIYPQPGWVEHDPLEIWTRTQEVIDGALRKSGVERSEIAAVGVTNQRETTVVWEKATGKPVYNAIVWQDTRTDQICNQLAQDGGQDRFRPKVGLPLATYFSGPKITWILDNVPGVREKAEQGEVLFGNIDTWLIWNMTGGVNGGVHITDVSNASRTMLMNLETLDWDDDILDVMRVPRAMLPKIMPSAAVYGAAVGALEGIPVAGDLGDQQAALFGQTCFSVGEAKNTYGTGCFMLLNTGLKPVPSQNGLLTTVGYKIGDQPTVYCLEGSIAITGALVQWLRDNLRFFDFSSHIEEYANAVEDSGGIYIVPAFSGLFAPYWKSNARGAIVGLTRYITKNHICRAALEATAYQTREVLDAMNKDSGVDLTALKVDGGMVFNNTLMQFQADILGVPVIRPTVSETTALGAAYAAGLAVGFWKEVEDLRANWGKDHEWSPQMDSATRERLYSGWKKAVTRTFDWVD.

Residue threonine 12 participates in ADP binding. Positions 12, 13, and 14 each coordinate ATP. Position 12 (threonine 12) interacts with sn-glycerol 3-phosphate. ADP is bound at residue arginine 16. Residues arginine 82, glutamate 83, tyrosine 134, and aspartate 244 each coordinate sn-glycerol 3-phosphate. Arginine 82, glutamate 83, tyrosine 134, aspartate 244, and glutamine 245 together coordinate glycerol. ADP-binding residues include threonine 266 and glycine 310. Positions 266, 310, 314, and 411 each coordinate ATP. ADP-binding residues include glycine 411 and asparagine 415.

It belongs to the FGGY kinase family.

It catalyses the reaction glycerol + ATP = sn-glycerol 3-phosphate + ADP + H(+). Its pathway is polyol metabolism; glycerol degradation via glycerol kinase pathway; sn-glycerol 3-phosphate from glycerol: step 1/1. Inhibited by fructose 1,6-bisphosphate (FBP). In terms of biological role, key enzyme in the regulation of glycerol uptake and metabolism. Catalyzes the phosphorylation of glycerol to yield sn-glycerol 3-phosphate. The sequence is that of Glycerol kinase from Roseiflexus sp. (strain RS-1).